We begin with the raw amino-acid sequence, 779 residues long: Endonuclease MutS2 (779 aa).

328-335 is an ATP binding site; it reads GPNTGGKT. The Smr domain occupies 704–779; it reads LDLRGKRYEE…GSGATIVTLG (76 aa).

It belongs to the DNA mismatch repair MutS family. MutS2 subfamily. Homodimer. Binds to stalled ribosomes, contacting rRNA.

Its function is as follows. Endonuclease that is involved in the suppression of homologous recombination and thus may have a key role in the control of bacterial genetic diversity. Functionally, acts as a ribosome collision sensor, splitting the ribosome into its 2 subunits. Detects stalled/collided 70S ribosomes which it binds and splits by an ATP-hydrolysis driven conformational change. Acts upstream of the ribosome quality control system (RQC), a ribosome-associated complex that mediates the extraction of incompletely synthesized nascent chains from stalled ribosomes and their subsequent degradation. Probably generates substrates for RQC. The sequence is that of Endonuclease MutS2 from Streptococcus pyogenes serotype M1.